Consider the following 161-residue polypeptide: Cell division control protein 31 (161 aa).

4 consecutive EF-hand domains span residues 20 to 55 (EQKQ…LGFE), 56 to 91 (LPKR…KILK), 93 to 128 (DPLD…LGET), and 129 to 161 (LTDE…CTDS). Ca(2+)-binding residues include D33, N35, D37, and E44. A Phosphothreonine modification is found at T130. 5 residues coordinate Ca(2+): D142, D144, D146, E148, and E153.

The protein belongs to the centrin family. In terms of assembly, component of the spindle pole body (SPB), acting as the connector of microtubule arrays in the cytoplasm and the nucleoplasm, is involved in nuclear positioning before chromosome segregation, SPB separation, spindle formation, chromosome segregation, nuclear migration into the bud, nuclear reorientation after cytokinesis and nuclear fusion during conjugation. The SPB half-bridge, which is tightly associated with the cytoplasmic side of the nuclear envelope and the SPB, is playing a key role as the starting structure for and in the initiation of SPB duplication in G1. At the SPB half-bridge CDC31 interacts with KAR1, MPS3 and SFI1. Interacts with KIC1. Interacts with VPS13. Associates with nuclear pore complexes (NPCs).

It is found in the nucleus envelope. Its subcellular location is the cytoplasm. It localises to the cytoskeleton. The protein resides in the microtubule organizing center. The protein localises to the spindle pole body. Functionally, functions as a component of the spindle pole body (SPB) half-bridge. At the SPB, it is recruited by KAR1 and MPS3 to the SPB half-bridge and involved in the initial steps of SPB duplication. Also involved in connection with the protein kinase KIC1 in the maintenance of cell morphology and integrity. May play a role in vesicle-mediated transport, in a VPS13-dependent manner. This Saccharomyces cerevisiae (strain ATCC 204508 / S288c) (Baker's yeast) protein is Cell division control protein 31 (CDC31).